The chain runs to 292 residues: Phosphatidylserine decarboxylase proenzyme (292 aa).

Catalysis depends on charge relay system; for autoendoproteolytic cleavage activity residues aspartate 89, histidine 146, and serine 252. Serine 252 functions as the Schiff-base intermediate with substrate; via pyruvic acid; for decarboxylase activity in the catalytic mechanism. Pyruvic acid (Ser); by autocatalysis is present on serine 252.

The protein belongs to the phosphatidylserine decarboxylase family. PSD-B subfamily. Prokaryotic type I sub-subfamily. As to quaternary structure, heterodimer of a large membrane-associated beta subunit and a small pyruvoyl-containing alpha subunit. Requires pyruvate as cofactor. Is synthesized initially as an inactive proenzyme. Formation of the active enzyme involves a self-maturation process in which the active site pyruvoyl group is generated from an internal serine residue via an autocatalytic post-translational modification. Two non-identical subunits are generated from the proenzyme in this reaction, and the pyruvate is formed at the N-terminus of the alpha chain, which is derived from the carboxyl end of the proenzyme. The autoendoproteolytic cleavage occurs by a canonical serine protease mechanism, in which the side chain hydroxyl group of the serine supplies its oxygen atom to form the C-terminus of the beta chain, while the remainder of the serine residue undergoes an oxidative deamination to produce ammonia and the pyruvoyl prosthetic group on the alpha chain. During this reaction, the Ser that is part of the protease active site of the proenzyme becomes the pyruvoyl prosthetic group, which constitutes an essential element of the active site of the mature decarboxylase.

The protein resides in the cell membrane. It carries out the reaction a 1,2-diacyl-sn-glycero-3-phospho-L-serine + H(+) = a 1,2-diacyl-sn-glycero-3-phosphoethanolamine + CO2. It functions in the pathway phospholipid metabolism; phosphatidylethanolamine biosynthesis; phosphatidylethanolamine from CDP-diacylglycerol: step 2/2. Its function is as follows. Catalyzes the formation of phosphatidylethanolamine (PtdEtn) from phosphatidylserine (PtdSer). This Shewanella sp. (strain MR-7) protein is Phosphatidylserine decarboxylase proenzyme.